Here is a 140-residue protein sequence, read N- to C-terminus: Large ribosomal subunit protein uL11 (140 aa).

Belongs to the universal ribosomal protein uL11 family. In terms of assembly, part of the ribosomal stalk of the 50S ribosomal subunit. Interacts with L10 and the large rRNA to form the base of the stalk. L10 forms an elongated spine to which L12 dimers bind in a sequential fashion forming a multimeric L10(L12)X complex. In terms of processing, one or more lysine residues are methylated.

Its function is as follows. Forms part of the ribosomal stalk which helps the ribosome interact with GTP-bound translation factors. The sequence is that of Large ribosomal subunit protein uL11 from Heliobacterium modesticaldum (strain ATCC 51547 / Ice1).